The chain runs to 441 residues: Monodehydroascorbate reductase 3 (441 aa).

FAD is bound by residues G14–A17, E41, R48, K53, I96, and R147–E148. NAD(+) is bound by residues G173–E179, E197, R203, and G262. Residue F175–E179 participates in NADP(+) binding. 2 residues coordinate NADP(+): R203 and G262. FAD is bound at residue D299. E315–H316 provides a ligand contact to NAD(+). E315–H316 contributes to the NADP(+) binding site. L-ascorbate is bound at residue R321. Y350 lines the FAD pocket. Y350 is a binding site for NAD(+). Y350 contributes to the NADP(+) binding site. L-ascorbate is bound at residue R352. At S418 the chain carries Phosphoserine.

It belongs to the FAD-dependent oxidoreductase family. It depends on FAD as a cofactor.

It is found in the cytoplasm. The enzyme catalyses 2 monodehydro-L-ascorbate radical + NADH + H(+) = 2 L-ascorbate + NAD(+). Functionally, catalyzes the conversion of monodehydroascorbate to ascorbate, oxidizing NADH in the process. Required for producing sufficient ascorbate to maintain the interaction between Piriformospora indica and Arabidopsis in a mutualistic state. This Arabidopsis thaliana (Mouse-ear cress) protein is Monodehydroascorbate reductase 3.